The following is a 234-amino-acid chain: ATP-dependent dethiobiotin synthetase BioD (234 aa).

Residue 12 to 17 participates in ATP binding; it reads GAGKTI. T16 contacts Mg(2+). Residue K39 is part of the active site. A substrate-binding site is contributed by T43. ATP is bound by residues D47, 108–111, 168–169, and 200–202; these read EGLG, SC, and PYL. The Mg(2+) site is built by D47 and E108.

It belongs to the dethiobiotin synthetase family. As to quaternary structure, homodimer. Mg(2+) serves as cofactor.

The protein localises to the cytoplasm. The enzyme catalyses (7R,8S)-7,8-diammoniononanoate + CO2 + ATP = (4R,5S)-dethiobiotin + ADP + phosphate + 3 H(+). It carries out the reaction (7R,8S)-8-amino-7-(carboxyamino)nonanoate + ATP = (4R,5S)-dethiobiotin + ADP + phosphate + H(+). It participates in cofactor biosynthesis; biotin biosynthesis; biotin from 7,8-diaminononanoate: step 1/2. In terms of biological role, catalyzes a mechanistically unusual reaction, the ATP-dependent insertion of CO2 between the N7 and N8 nitrogen atoms of 7,8-diaminopelargonic acid (DAPA, also called 7,8-diammoniononanoate) to form a ureido ring. This cyanobacterium does not encode bioA (which catalyzes the formation of the precursor for this reaction in the cannonical pathway), instead it encodes bioU, which replaces bioA and also performs the first half of the cannonical BioD reaction. Thus in this organism BioD has a different substrate. This is ATP-dependent dethiobiotin synthetase BioD from Rippkaea orientalis (strain PCC 8801 / RF-1) (Cyanothece sp. (strain PCC 8801)).